Reading from the N-terminus, the 419-residue chain is UDP-N-acetylglucosamine 1-carboxyvinyltransferase (419 aa).

Phosphoenolpyruvate is bound at residue 22 to 23; sequence KN. Arg95 is a UDP-N-acetyl-alpha-D-glucosamine binding site. The active-site Proton donor is the Cys119. Cys119 carries the 2-(S-cysteinyl)pyruvic acid O-phosphothioketal modification. UDP-N-acetyl-alpha-D-glucosamine-binding positions include 164–167, Asp308, and Ile330; that span reads KVSV.

Belongs to the EPSP synthase family. MurA subfamily.

The protein resides in the cytoplasm. It catalyses the reaction phosphoenolpyruvate + UDP-N-acetyl-alpha-D-glucosamine = UDP-N-acetyl-3-O-(1-carboxyvinyl)-alpha-D-glucosamine + phosphate. Its pathway is cell wall biogenesis; peptidoglycan biosynthesis. Cell wall formation. Adds enolpyruvyl to UDP-N-acetylglucosamine. This chain is UDP-N-acetylglucosamine 1-carboxyvinyltransferase, found in Rickettsia massiliae (strain Mtu5).